A 105-amino-acid chain; its full sequence is Nucleoid-associated protein EAT1b_1710 (105 aa).

The segment covering 1–16 (MRGMGNMNNMMKQMQK) has biased composition (low complexity). Positions 1 to 26 (MRGMGNMNNMMKQMQKMQKDMAKAQE) are disordered. Over residues 17–26 (MQKDMAKAQE) the composition is skewed to basic and acidic residues.

It belongs to the YbaB/EbfC family. As to quaternary structure, homodimer.

It localises to the cytoplasm. It is found in the nucleoid. Functionally, binds to DNA and alters its conformation. May be involved in regulation of gene expression, nucleoid organization and DNA protection. The sequence is that of Nucleoid-associated protein EAT1b_1710 from Exiguobacterium sp. (strain ATCC BAA-1283 / AT1b).